The chain runs to 111 residues: EGDVAKGEAAFKRCSACHAIGEGAKNKVGPQLNGIIGRTAGGDPDYNYSNAMKKAGGEGLVWTPQELRDFLSAPKKKIPGNKMALAGISKPEELDNLIAYLIFSASSKPAZ.

Heme c-binding residues include Cys14, Cys17, His18, and Met83.

The protein belongs to the cytochrome c family. Binds 1 heme c group covalently per subunit.

In terms of biological role, cytochrome c2 is found mainly in purple, non-sulfur, photosynthetic bacteria where it functions as the electron donor to the oxidized bacteriochlorophyll in the photophosphorylation pathway. However, it may also have a role in the respiratory chain and is found in some non-photosynthetic bacteria. The protein is Cytochrome c2 of Agrobacterium tumefaciens (strain II Chrys).